A 239-amino-acid polypeptide reads, in one-letter code: Uridylate kinase (239 aa).

An ATP-binding site is contributed by 12 to 15 (KLSG). The segment at 20–25 (GDQGYG) is involved in allosteric activation by GTP. Glycine 54 lines the UMP pocket. Positions 55 and 59 each coordinate ATP. Residues aspartate 74 and 135-142 (TGNPYFTT) each bind UMP. The ATP site is built by threonine 162, tyrosine 168, and aspartate 171.

It belongs to the UMP kinase family. As to quaternary structure, homohexamer.

Its subcellular location is the cytoplasm. The catalysed reaction is UMP + ATP = UDP + ADP. It functions in the pathway pyrimidine metabolism; CTP biosynthesis via de novo pathway; UDP from UMP (UMPK route): step 1/1. Its activity is regulated as follows. Allosterically activated by GTP. Inhibited by UTP. Functionally, catalyzes the reversible phosphorylation of UMP to UDP. This is Uridylate kinase from Geobacter metallireducens (strain ATCC 53774 / DSM 7210 / GS-15).